The following is a 337-amino-acid chain: DNA-directed RNA polymerase subunit alpha (337 aa).

Residues 1-233 (MVREKVTVST…DLFIPFLHME (233 aa)) form an alpha N-terminal domain (alpha-NTD) region. The alpha C-terminal domain (alpha-CTD) stretch occupies residues 264–337 (NKKIALKSIF…FVIDLAKNKF (74 aa)).

It belongs to the RNA polymerase alpha chain family. As to quaternary structure, in plastids the minimal PEP RNA polymerase catalytic core is composed of four subunits: alpha, beta, beta', and beta''. When a (nuclear-encoded) sigma factor is associated with the core the holoenzyme is formed, which can initiate transcription.

Its subcellular location is the plastid. The protein localises to the chloroplast. The enzyme catalyses RNA(n) + a ribonucleoside 5'-triphosphate = RNA(n+1) + diphosphate. DNA-dependent RNA polymerase catalyzes the transcription of DNA into RNA using the four ribonucleoside triphosphates as substrates. This chain is DNA-directed RNA polymerase subunit alpha, found in Atropa belladonna (Belladonna).